Here is a 351-residue protein sequence, read N- to C-terminus: Beta-hexosaminidase (351 aa).

Residues D62, R70, R134, and 164–165 each bind substrate; that span reads KH. H177 acts as the Proton donor/acceptor in catalysis. The Nucleophile role is filled by D249.

It belongs to the glycosyl hydrolase 3 family. NagZ subfamily. In terms of assembly, monomer.

It localises to the cytoplasm. The catalysed reaction is Hydrolysis of terminal non-reducing N-acetyl-D-hexosamine residues in N-acetyl-beta-D-hexosaminides.. Its pathway is cell wall biogenesis; peptidoglycan recycling. Its function is as follows. Plays a role in peptidoglycan recycling by cleaving the terminal beta-1,4-linked N-acetylglucosamine (GlcNAc) from peptide-linked peptidoglycan fragments, giving rise to free GlcNAc, anhydro-N-acetylmuramic acid and anhydro-N-acetylmuramic acid-linked peptides. The chain is Beta-hexosaminidase from Pasteurella multocida (strain Pm70).